The following is a 972-amino-acid chain: Cycloisomaltooligosaccharide glucanotransferase (972 aa).

The N-terminal stretch at 1-38 (MVRFMYALRKRRLSLLLAMSLLVMCVASVVSPPPQALA) is a signal peptide. CBM6 domains lie at 421–546 (TRYE…LTLG) and 748–871 (DIYE…LDLD).

Belongs to the glycosyl hydrolase 66 family. Monomer.

It carries out the reaction cyclizes part of a (1-&gt;6)-alpha-D-glucan chain by formation of a (1-&gt;6)-alpha-D-glucosidic bond.. Its function is as follows. Produces cycloisomaltooligosaccharide from dextran containing 7, 8 or 9 glucose units. The enzyme is specific for (1-&gt;6)-alpha-D-glucans (dextrans) and, without activity toward (1-&gt;4)-alpha-D-glucans, such as amylose. It also has no activity on oligosaccharides, such as amylopectin and pullulan, containing (1-&gt;6)-alpha-D-glucosidic linkages at branch points. This chain is Cycloisomaltooligosaccharide glucanotransferase, found in Niallia circulans (Bacillus circulans).